Reading from the N-terminus, the 213-residue chain is ATP-dependent Clp protease proteolytic subunit 1 (213 aa).

Catalysis depends on Ser-108, which acts as the Nucleophile. His-133 is an active-site residue.

It belongs to the peptidase S14 family. As to quaternary structure, fourteen ClpP subunits assemble into 2 heptameric rings which stack back to back to give a disk-like structure with a central cavity, resembling the structure of eukaryotic proteasomes.

The protein resides in the cytoplasm. It carries out the reaction Hydrolysis of proteins to small peptides in the presence of ATP and magnesium. alpha-casein is the usual test substrate. In the absence of ATP, only oligopeptides shorter than five residues are hydrolyzed (such as succinyl-Leu-Tyr-|-NHMec, and Leu-Tyr-Leu-|-Tyr-Trp, in which cleavage of the -Tyr-|-Leu- and -Tyr-|-Trp bonds also occurs).. Functionally, cleaves peptides in various proteins in a process that requires ATP hydrolysis. Has a chymotrypsin-like activity. Plays a major role in the degradation of misfolded proteins. This Frankia casuarinae (strain DSM 45818 / CECT 9043 / HFP020203 / CcI3) protein is ATP-dependent Clp protease proteolytic subunit 1.